The chain runs to 235 residues: Orotidine 5'-phosphate decarboxylase (235 aa).

Residues Asp12, Lys34, 61–70 (DMKLLDIDNT), Thr116, Arg177, Gln186, Gly206, and Arg207 contribute to the substrate site. The active-site Proton donor is the Lys63.

The protein belongs to the OMP decarboxylase family. Type 1 subfamily. In terms of assembly, homodimer.

The catalysed reaction is orotidine 5'-phosphate + H(+) = UMP + CO2. It participates in pyrimidine metabolism; UMP biosynthesis via de novo pathway; UMP from orotate: step 2/2. Catalyzes the decarboxylation of orotidine 5'-monophosphate (OMP) to uridine 5'-monophosphate (UMP). The chain is Orotidine 5'-phosphate decarboxylase from Rhizobium etli (strain ATCC 51251 / DSM 11541 / JCM 21823 / NBRC 15573 / CFN 42).